The following is a 169-amino-acid chain: Inorganic pyrophosphatase (169 aa).

Residue Met1 is modified to N-formylmethionine. Substrate is bound by residues Lys28, Arg42, and Tyr54. Residues Asp64, Asp69, and Asp101 each coordinate Mg(2+). Residue Tyr138 participates in substrate binding.

It belongs to the PPase family. In terms of assembly, homohexamer. Mg(2+) is required as a cofactor.

Its subcellular location is the cytoplasm. It catalyses the reaction diphosphate + H2O = 2 phosphate + H(+). Its activity is regulated as follows. Inhibited by ATP, but not by fructose 1,6-bisphosphate or 2-phosphoglycerate. Its function is as follows. Hydrolyzes PPi generated in anabolic reactions. In terms of biological role, catalyzes the hydrolysis of inorganic pyrophosphate (PPi) forming two phosphate ions. This is Inorganic pyrophosphatase from Synechocystis sp. (strain ATCC 27184 / PCC 6803 / Kazusa).